A 363-amino-acid polypeptide reads, in one-letter code: MLTRLFKEPSLLPDMQKFGGWVDDSGSEDSKTKDEEQERCRLGDEDLDEGSVKGGGSRAQSEIAGEEDYDEDVDEDDCGEEGDGDRPKKRGPKKRKMTPARLERSKVRRQKANARERTRMHDLNSALDNLLKVVPCYSKTQKLSKIETLRLAKNYIWALSEILRNGKRPDVVSYVQTLCKGLSQPTTNLVAGCLQLNSRNFLTEQCQEGVRFHTPTPSFSIQSYPYQCSRLSSTNCQSGSSTHSLRNHSLCSAYEALYTEGTSPEYISADFEGHHGPPVCVNGNFGVRQEEPLSPDAERGYQYSMHYTNLHGSRSSAAHGITCGPPGARSGSVHSENLPLFHDVHMHHDRTPAYEELNAFFHS.

The disordered stretch occupies residues 1 to 116; sequence MLTRLFKEPS…VRRQKANARE (116 aa). Positions 28 to 44 are enriched in basic and acidic residues; that stretch reads EDSKTKDEEQERCRLGD. The span at 64 to 83 shows a compositional bias: acidic residues; sequence AGEEDYDEDVDEDDCGEEGD. A compositionally biased stretch (basic residues) spans 87–98; the sequence is PKKRGPKKRKMT. A Nuclear localization signal motif is present at residues 93-99; the sequence is KKRKMTP. The region spanning 107–159 is the bHLH domain; sequence VRRQKANARERTRMHDLNSALDNLLKVVPCYSKTQKLSKIETLRLAKNYIWAL.

Efficient DNA binding requires dimerization with another bHLH protein. In terms of tissue distribution, in adult, expressed strongly in brain and more weakly in skin, muscle, eye and ovary.

The protein resides in the nucleus. Functionally, transcriptional regulator. Appears to mediate neuronal differentiation. In Danio rerio (Zebrafish), this protein is Neurogenic differentiation factor 2.